The primary structure comprises 61 residues: Small ribosomal subunit protein uS14 (61 aa).

Zn(2+)-binding residues include Cys24, Cys27, Cys40, and Cys43.

Belongs to the universal ribosomal protein uS14 family. Zinc-binding uS14 subfamily. Part of the 30S ribosomal subunit. Contacts proteins S3 and S10. It depends on Zn(2+) as a cofactor.

In terms of biological role, binds 16S rRNA, required for the assembly of 30S particles and may also be responsible for determining the conformation of the 16S rRNA at the A site. In Dehalococcoides mccartyi (strain ATCC BAA-2266 / KCTC 15142 / 195) (Dehalococcoides ethenogenes (strain 195)), this protein is Small ribosomal subunit protein uS14.